Here is a 190-residue protein sequence, read N- to C-terminus: MRASRPAVHPVEAAPPPPAAAAEGPEAQVEGAAHPRGVRMKDPPGAPGTPAGLGLRLAQAFFAAAALAVMASTNDFPSVSAFSYLVAAAILQCLWSLLLAFVDIYALLVKRSLRNARAVCIFTIGDGITGTITLGAACASAGITVLIGNDLNICAENHCASFETATALAFISWFALAPSCILNFWSMASR.

2 stretches are compositionally biased toward low complexity: residues 1 to 12 (MRASRPAVHPVE) and 20 to 31 (AAAEGPEAQVEG). The segment at 1 to 31 (MRASRPAVHPVEAAPPPPAAAAEGPEAQVEG) is disordered. At 1 to 50 (MRASRPAVHPVEAAPPPPAAAAEGPEAQVEGAAHPRGVRMKDPPGAPGTP) the chain is on the cytoplasmic side. The helical transmembrane segment at 51-71 (AGLGLRLAQAFFAAAALAVMA) threads the bilayer. The Extracellular segment spans residues 72–81 (STNDFPSVSA). Residues 82 to 102 (FSYLVAAAILQCLWSLLLAFV) traverse the membrane as a helical segment. The Cytoplasmic segment spans residues 103–126 (DIYALLVKRSLRNARAVCIFTIGD). A helical membrane pass occupies residues 127–147 (GITGTITLGAACASAGITVLI). Topologically, residues 148–164 (GNDLNICAENHCASFET) are extracellular. The helical transmembrane segment at 165–185 (ATALAFISWFALAPSCILNFW) threads the bilayer. Residues 186 to 190 (SMASR) lie on the Cytoplasmic side of the membrane.

The protein belongs to the Casparian strip membrane proteins (CASP) family. Homodimer and heterodimers.

It is found in the cell membrane. The sequence is that of CASP-like protein 5A3 from Zea mays (Maize).